Here is a 490-residue protein sequence, read N- to C-terminus: Protein nucleotidyltransferase YdiU (490 aa).

Residues Gly94, Gly96, Arg97, Lys117, Asp129, Gly130, Arg180, and Arg187 each contribute to the ATP site. Residue Asp256 is the Proton acceptor of the active site. Residues Asn257 and Asp266 each contribute to the Mg(2+) site. An ATP-binding site is contributed by Asp266.

It belongs to the SELO family. Requires Mg(2+) as cofactor. It depends on Mn(2+) as a cofactor.

The enzyme catalyses L-seryl-[protein] + ATP = 3-O-(5'-adenylyl)-L-seryl-[protein] + diphosphate. The catalysed reaction is L-threonyl-[protein] + ATP = 3-O-(5'-adenylyl)-L-threonyl-[protein] + diphosphate. It catalyses the reaction L-tyrosyl-[protein] + ATP = O-(5'-adenylyl)-L-tyrosyl-[protein] + diphosphate. It carries out the reaction L-histidyl-[protein] + UTP = N(tele)-(5'-uridylyl)-L-histidyl-[protein] + diphosphate. The enzyme catalyses L-seryl-[protein] + UTP = O-(5'-uridylyl)-L-seryl-[protein] + diphosphate. The catalysed reaction is L-tyrosyl-[protein] + UTP = O-(5'-uridylyl)-L-tyrosyl-[protein] + diphosphate. In terms of biological role, nucleotidyltransferase involved in the post-translational modification of proteins. It can catalyze the addition of adenosine monophosphate (AMP) or uridine monophosphate (UMP) to a protein, resulting in modifications known as AMPylation and UMPylation. The chain is Protein nucleotidyltransferase YdiU from Clostridium beijerinckii (strain ATCC 51743 / NCIMB 8052) (Clostridium acetobutylicum).